The chain runs to 118 residues: 5-hydroxyisourate hydrolase (118 aa).

Substrate-binding residues include histidine 11, arginine 51, and tyrosine 115.

This sequence belongs to the transthyretin family. 5-hydroxyisourate hydrolase subfamily. Homotetramer.

The protein localises to the peroxisome. The enzyme catalyses 5-hydroxyisourate + H2O = 5-hydroxy-2-oxo-4-ureido-2,5-dihydro-1H-imidazole-5-carboxylate + H(+). It functions in the pathway purine metabolism; urate degradation; (S)-allantoin from urate: step 2/3. Functionally, catalyzes the hydrolysis of 5-hydroxyisourate (HIU) to 2-oxo-4-hydroxy-4-carboxy-5-ureidoimidazoline (OHCU). In Mus musculus (Mouse), this protein is 5-hydroxyisourate hydrolase (Urah).